The primary structure comprises 1475 residues: Mediator of RNA polymerase II transcription subunit 1 (1475 aa).

A compositionally biased stretch (polar residues) spans 1 to 10 (MSGSNAKSSG). Disordered stretches follow at residues 1-26 (MSGS…KNKQ), 616-644 (ETDP…KTSD), 709-992 (GVTA…VASG), 1135-1166 (QPQP…AGAS), 1184-1245 (NKTG…SKKA), 1263-1354 (KANS…RFDH), and 1387-1475 (PKLS…LAGE). 3 stretches are compositionally biased toward low complexity: residues 621–641 (SGSS…GSAK), 711–729 (TASS…ITGK), and 738–782 (KSTA…SGSS). Ser830, Ser834, Ser854, and Ser858 each carry phosphoserine. 2 stretches are compositionally biased toward polar residues: residues 860 to 874 (VYSS…NSPK) and 888 to 897 (GKPSMSTLKS). Low complexity predominate over residues 919–934 (TSSGPSASSGSSGATG). Residues 944 to 953 (APPPPPPIPP) are compositionally biased toward pro residues. 5 stretches are compositionally biased toward low complexity: residues 954–966 (LASS…SSQS), 973–989 (SSAS…TAGV), 1143–1159 (TSSC…SAGS), 1185–1225 (KTGS…TGST), and 1265–1276 (NSSGNLSSKLSG). Positions 1286-1296 (TKSNSTNSFQE) are enriched in polar residues. Low complexity-rich tracts occupy residues 1334-1346 (SGSV…GSMS) and 1399-1409 (TSGRSTPSGSS). Polar residues-rich tracts occupy residues 1415–1430 (GTSS…STGL) and 1442–1458 (SQSG…TAGT).

It belongs to the Mediator complex subunit 1 family. Component of the Mediator complex.

The protein localises to the nucleus. In terms of biological role, component of the Mediator complex, a coactivator involved in the regulated transcription of nearly all RNA polymerase II-dependent genes. Mediator functions as a bridge to convey information from gene-specific regulatory proteins to the basal RNA polymerase II transcription machinery. Mediator is recruited to promoters by direct interactions with regulatory proteins and serves as a scaffold for the assembly of a functional preinitiation complex with RNA polymerase II and the general transcription factors. Required for activated transcription of the MtnA, MtnB and MtnD genes. This is Mediator of RNA polymerase II transcription subunit 1 (MED1) from Drosophila melanogaster (Fruit fly).